The sequence spans 333 residues: GDP-mannose transporter GONST1 (333 aa).

9 helical membrane passes run 33–55 (ALLS…KFVL), 62–84 (AGIF…LSLM), 99–121 (VWFP…LKYI), 153–170 (VWAA…GGIT), 174–196 (FNAV…SLTL), 216–238 (SMVL…FFNE), 253–275 (FWMV…MWFL), 282–304 (TYSL…LFNV), and 308–325 (LQNS…VVFA).

It belongs to the nucleotide-sugar transporter family. GDP-Mannose:GMP antiporter (GMA) (TC 2.A.7.13) subfamily.

The protein localises to the golgi apparatus membrane. Functionally, involved in the import of GDP-mannose from the cytoplasm into the Golgi lumen. Required for the luminal synthesis of a variety of plant cell surface components. Is required for the correct mannosylation of the glycosylinositol phosphoceramides (GIPC). Can indifferently transport GDP-mannose, GDP-Glucose, GDP-Fucose or GDP-Galactose in vitro. This is GDP-mannose transporter GONST1 from Arabidopsis thaliana (Mouse-ear cress).